The sequence spans 209 residues: Large ribosomal subunit protein bL21m (209 aa).

A mitochondrion-targeting transit peptide spans 1 to 43 (MAAAIAASALPGAFGRLVSVCSRSILASQGSGSASLWSASRRF).

This sequence belongs to the bacterial ribosomal protein bL21 family. As to quaternary structure, component of the mitochondrial ribosome large subunit (39S) which comprises a 16S rRNA and about 50 distinct proteins.

It is found in the mitochondrion. The sequence is that of Large ribosomal subunit protein bL21m (Mrpl21) from Mus musculus (Mouse).